The sequence spans 2205 residues: Genome polyprotein (2205 aa).

A lipid anchor (N-myristoyl glycine; by host) is attached at glycine 2. At 2 to 1518 the chain is on the cytoplasmic side; sequence GAQVSSQKVG…NINRAMTILQ (1517 aa). The interval 579-599 is amphipathic alpha-helix; sequence GLGDLIEGVVEGVTRNALTPL. Positions 598–613 are enriched in polar residues; that stretch reads PLTPVNNLPDTRSSGP. Residues 598–619 form a disordered region; the sequence is PLTPVNNLPDTRSSGPAHSKET. Residues histidine 899 and aspartate 917 each act as for protease 2A activity in the active site. Cysteine 934 and cysteine 936 together coordinate Zn(2+). Catalysis depends on cysteine 988, which acts as the For protease 2A activity. 2 residues coordinate Zn(2+): cysteine 994 and histidine 996. Residues 1126–1198 form a membrane-binding region; that stretch reads GDSWLKKFTE…HQSCPSQEHQ (73 aa). Positions 1126-1264 are oligomerization; sequence GDSWLKKFTE…SPGTGKSVAT (139 aa). Positions 1147–1151 are RNA-binding; that stretch reads SNKIS. The region spanning 1230–1386 is the SF3 helicase domain; that stretch reads EHTINNYVQF…SEYSRDGKLN (157 aa). 1254 to 1261 serves as a coordination point for ATP; it reads GSPGTGKS. Zn(2+) contacts are provided by cysteine 1394, cysteine 1397, cysteine 1406, and cysteine 1411. A C4-type zinc finger spans residues 1394–1411; the sequence is CKNCHQPANFKRCCPLVC. Residues 1438 to 1445 form an RNA-binding region; sequence ERNRRSSI. An oligomerization region spans residues 1449 to 1454; the sequence is MEALFQ. Residues 1519 to 1534 lie within the membrane without spanning it; that stretch reads AVTTFAAVAGVVYVMY. At 1535–2205 the chain is on the cytoplasmic side; the sequence is KLFAGHQGAY…TLYRRWLDSF (671 aa). Position 1544 is an O-(5'-phospho-RNA)-tyrosine (tyrosine 1544). Positions 1564–1742 constitute a Peptidase C3 domain; it reads GPGFDYAVAM…FAAALKRSYF (179 aa). Active-site for protease 3C activity residues include histidine 1603, glutamate 1634, and cysteine 1710. The region spanning 1971–2086 is the RdRp catalytic domain; sequence MEEKLFDYTG…SYPHEVDASL (116 aa). Mg(2+) contacts are provided by aspartate 1977 and aspartate 2072.

This sequence belongs to the picornaviruses polyprotein family. In terms of assembly, interacts with capsid protein VP1 and capsid protein VP3 to form heterotrimeric protomers. Interacts with capsid protein VP0, and capsid protein VP3 to form heterotrimeric protomers. Interacts with human PVR. Five protomers subsequently associate to form pentamers which serve as building blocks for the capsid. Interacts with capsid protein VP2, capsid protein VP3 and capsid protein VP4 following cleavage of capsid protein VP0. As to quaternary structure, interacts with capsid protein VP1 and capsid protein VP3 in the mature capsid. In terms of assembly, interacts with capsid protein VP0 and capsid protein VP1 to form heterotrimeric protomers. Five protomers subsequently associate to form pentamers which serve as building blocks for the capsid. Interacts with capsid protein VP4 in the mature capsid. Interacts with protein 2C; this interaction may be important for virion morphogenesis. Interacts with capsid protein VP1 and capsid protein VP3. As to quaternary structure, homodimer. In terms of assembly, homohexamer; forms a hexameric ring structure with 6-fold symmetry characteristic of AAA+ ATPases. Interacts (via N-terminus) with host RTN3 (via reticulon domain); this interaction is important for viral replication. Interacts with capsid protein VP3; this interaction may be important for virion morphogenesis. Interacts with protein 3CD. As to quaternary structure, homodimer. Interacts with host GBF1. Interacts (via GOLD domain) with host ACBD3 (via GOLD domain); this interaction allows the formation of a viral protein 3A/ACBD3 heterotetramer with a 2:2 stoichiometry, which will stimulate the recruitment of host PI4KB in order to synthesize PI4P at the viral RNA replication sites. In terms of assembly, interacts with RNA-directed RNA polymerase. Interacts with protein 3AB and with RNA-directed RNA polymerase. As to quaternary structure, interacts with Viral protein genome-linked and with protein 3CD. Mg(2+) serves as cofactor. Post-translationally, specific enzymatic cleavages in vivo by the viral proteases yield processing intermediates and the mature proteins. In terms of processing, myristoylation is required for the formation of pentamers during virus assembly. Further assembly of 12 pentamers and a molecule of genomic RNA generates the provirion. During virion maturation, immature virions are rendered infectious following cleavage of VP0 into VP4 and VP2. This maturation seems to be an autocatalytic event triggered by the presence of RNA in the capsid and it is followed by a conformational change infectious virion. Post-translationally, myristoylation is required during RNA encapsidation and formation of the mature virus particle. In terms of processing, VPg is uridylylated by the polymerase into VPg-pUpU. This acts as a nucleotide-peptide primer for the genomic RNA replication.

It is found in the virion. The protein localises to the host cytoplasm. Its subcellular location is the host cytoplasmic vesicle membrane. It localises to the host nucleus. The enzyme catalyses a ribonucleoside 5'-triphosphate + H2O = a ribonucleoside 5'-diphosphate + phosphate + H(+). It catalyses the reaction Selective cleavage of Tyr-|-Gly bond in the picornavirus polyprotein.. It carries out the reaction RNA(n) + a ribonucleoside 5'-triphosphate = RNA(n+1) + diphosphate. The catalysed reaction is Selective cleavage of Gln-|-Gly bond in the poliovirus polyprotein. In other picornavirus reactions Glu may be substituted for Gln, and Ser or Thr for Gly.. Replication or transcription is subject to high level of random mutations by the nucleotide analog ribavirin. Functionally, forms an icosahedral capsid of pseudo T=3 symmetry with capsid proteins VP2 and VP3. The capsid is 300 Angstroms in diameter, composed of 60 copies of each capsid protein and enclosing the viral positive strand RNA genome. Capsid protein VP1 mainly forms the vertices of the capsid. Capsid protein VP1 interacts with host cell receptor PVR to provide virion attachment to target host cells. This attachment induces virion internalization predominantly through clathrin- and caveolin-independent endocytosis in Hela cells and through caveolin-mediated endocytosis in brain microvascular endothelial cells. Tyrosine kinases are probably involved in the entry process. Virus binding to PVR induces increased junctional permeability and rearrangement of junctional proteins. Modulation of endothelial tight junctions, as well as cytolytic infection of endothelial cells themselves, may result in loss of endothelial integrity which may help the virus to reach the CNS. After binding to its receptor, the capsid undergoes conformational changes. Capsid protein VP1 N-terminus (that contains an amphipathic alpha-helix) and capsid protein VP4 are externalized. Together, they shape a pore in the host membrane through which viral genome is translocated to host cell cytoplasm. In terms of biological role, forms an icosahedral capsid of pseudo T=3 symmetry with capsid proteins VP2 and VP3. The capsid is 300 Angstroms in diameter, composed of 60 copies of each capsid protein and enclosing the viral positive strand RNA genome. Its function is as follows. Lies on the inner surface of the capsid shell. After binding to the host receptor, the capsid undergoes conformational changes. Capsid protein VP4 is released, Capsid protein VP1 N-terminus is externalized, and together, they shape a pore in the host membrane through which the viral genome is translocated into the host cell cytoplasm. Component of immature procapsids, which is cleaved into capsid proteins VP4 and VP2 after maturation. Allows the capsid to remain inactive before the maturation step. Functionally, cysteine protease that cleaves viral polyprotein and specific host proteins. It is responsible for the autocatalytic cleavage between the P1 and P2 regions, which is the first cleavage occurring in the polyprotein. Also cleaves the host translation initiation factor EIF4G1, in order to shut down the capped cellular mRNA translation. Inhibits the host nucleus-cytoplasm protein and RNA trafficking by cleaving host members of the nuclear pores including NUP98, NUP62 and NUP153. Counteracts stress granule formation probably by antagonizing its assembly or promoting its dissassembly. Cleaves and inhibits host IFIH1/MDA5, thereby inhibiting the type-I IFN production and the establishment of the antiviral state. Cleaves and inhibits host MAVS, thereby inhibiting the type-I IFN production and the establishment of the antiviral state. In terms of biological role, plays an essential role in the virus replication cycle by acting as a viroporin. Creates a pore in the host endoplasmic reticulum and as a consequence releases Ca2+ in the cytoplasm of infected cell. In turn, high levels of cytoplasmic calcium may trigger membrane trafficking and transport of viral ER-associated proteins to viroplasms, sites of viral genome replication. Its function is as follows. Induces and associates with structural rearrangements of intracellular membranes. Displays RNA-binding, nucleotide binding and NTPase activities. May play a role in virion morphogenesis and viral RNA encapsidation by interacting with the capsid protein VP3. Localizes the viral replication complex to the surface of membranous vesicles. Together with protein 3CD binds the Cis-Active RNA Element (CRE) which is involved in RNA synthesis initiation. Acts as a cofactor to stimulate the activity of 3D polymerase, maybe through a nucleid acid chaperone activity. Functionally, localizes the viral replication complex to the surface of membranous vesicles. It inhibits host cell endoplasmic reticulum-to-Golgi apparatus transport and causes the disassembly of the Golgi complex, possibly through GBF1 interaction. This would result in depletion of MHC, trail receptors and IFN receptors at the host cell surface. Plays an essential role in viral RNA replication by recruiting ACBD3 and PI4KB at the viral replication sites, thereby allowing the formation of the rearranged membranous structures where viral replication takes place. In terms of biological role, acts as a primer for viral RNA replication and remains covalently bound to viral genomic RNA. VPg is uridylylated prior to priming replication into VPg-pUpU. The oriI viral genomic sequence may act as a template for this. The VPg-pUpU is then used as primer on the genomic RNA poly(A) by the RNA-dependent RNA polymerase to replicate the viral genome. During genome replication, the VPg-RNA linkage is removed by the host TDP2, thereby accelerating replication. During the late stage of the replication cycle, host TDP2 is excluded from sites of viral RNA synthesis and encapsidation, allowing for the generation of progeny virions. Its function is as follows. Involved in the viral replication complex and viral polypeptide maturation. It exhibits protease activity with a specificity and catalytic efficiency that is different from protease 3C. Protein 3CD lacks polymerase activity. Protein 3CD binds to the 5'UTR of the viral genome. Major viral protease that mediates proteolytic processing of the polyprotein. Cleaves host EIF5B, contributing to host translation shutoff. Also cleaves host PABPC1, contributing to host translation shutoff. Cleaves host RIGI and thus contributes to the inhibition of type I interferon production. Cleaves host NLRP1, triggers host N-glycine-mediated degradation of the autoinhibitory NLRP1 N-terminal fragment. Inhibits the integrated stress response (ISR) in the infected cell by cleaving host G3BP1. Stress granule formation is thus inhibited, which allows protein synthesis and viral replication. Functionally, replicates the viral genomic RNA on the surface of intracellular membranes. May form linear arrays of subunits that propagate along a strong head-to-tail interaction called interface-I. Covalently attaches UMP to a tyrosine of VPg, which is used to prime RNA synthesis. The positive stranded RNA genome is first replicated at virus induced membranous vesicles, creating a dsRNA genomic replication form. This dsRNA is then used as template to synthesize positive stranded RNA genomes. ss(+)RNA genomes are either translated, replicated or encapsidated. This is Genome polyprotein from Homo sapiens (Human).